A 583-amino-acid chain; its full sequence is CD166 antigen (583 aa).

The N-terminal stretch at 1–27 (MASKAAPSCRLVFCLLISATVLRPGLG) is a signal peptide. Ig-like V-type domains are found at residues 28-120 (WYTV…TEDD) and 125-234 (PTVV…KTVY). Topologically, residues 28–527 (WYTVNSAYGD…NKEKVNDQAK (500 aa)) are extracellular. 2 disulfides stabilise this stretch: Cys-43–Cys-113 and Cys-157–Cys-220. 9 N-linked (GlcNAc...) asparagine glycosylation sites follow: Asn-91, Asn-95, Asn-167, Asn-265, Asn-306, Asn-361, Asn-457, Asn-480, and Asn-499. 3 Ig-like C2-type domains span residues 245 to 328 (PTEQ…AAIT), 333 to 409 (DLSL…ESLT), and 416 to 501 (PQIK…LNVS). Cystine bridges form between Cys-270-Cys-313, Cys-354-Cys-392, and Cys-435-Cys-485. The chain crosses the membrane as a helical span at residues 528–549 (LIVGIVVGLLLAALVAGVVYWL). Residues 550–583 (YMKKSKTASKHVNKDLGNMEENKKLEENNHKTEA) are Cytoplasmic-facing. The segment at 562 to 583 (NKDLGNMEENKKLEENNHKTEA) is disordered. Positions 569–583 (EENKKLEENNHKTEA) are enriched in basic and acidic residues.

Homodimer. Interacts (via extracellular domain) with CD6 (via extracellular domain). Homodimerization and interaction with CD6 involve the same region and cannot occur simultaneously. The affinity for CD6 is much higher than the affinity for self-association. Interacts (via glycosylated extracellular domain) with LGALS1 and LGALS3. Interaction with LGALS1 or LGALS3 inhibits interaction with CD6. Glycosylated. In terms of tissue distribution, constitutively expressed in the autonomic nervous system. Sympathetic and parasympathetic nerve fibers but not myelinated nerve fibers in the spinal nerve.

The protein localises to the cell membrane. Its subcellular location is the cell projection. It localises to the axon. It is found in the dendrite. Functionally, cell adhesion molecule that mediates both heterotypic cell-cell contacts via its interaction with CD6, as well as homotypic cell-cell contacts. Promotes T-cell activation and proliferation via its interactions with CD6. Contributes to the formation and maturation of the immunological synapse via its interactions with CD6. Mediates homotypic interactions with cells that express ALCAM. Mediates attachment of dendritic cells onto endothelial cells via homotypic interaction. Inhibits endothelial cell migration and promotes endothelial tube formation via homotypic interactions. Required for normal organization of the lymph vessel network. Required for normal hematopoietic stem cell engraftment in the bone marrow. Plays a role in hematopoiesis; required for normal numbers of hematopoietic stem cells in bone marrow. Promotes in vitro osteoblast proliferation and differentiation. Promotes neurite extension, axon growth and axon guidance; axons grow preferentially on surfaces that contain ALCAM. Mediates outgrowth and pathfinding for retinal ganglion cell axons. This chain is CD166 antigen (ALCAM), found in Bos taurus (Bovine).